The primary structure comprises 518 residues: Uronate isomerase (518 aa).

Belongs to the metallo-dependent hydrolases superfamily. Uronate isomerase family.

The enzyme catalyses D-glucuronate = D-fructuronate. It catalyses the reaction aldehydo-D-galacturonate = keto-D-tagaturonate. It functions in the pathway carbohydrate metabolism; pentose and glucuronate interconversion. This chain is Uronate isomerase (uxaC), found in Corynebacterium glutamicum (strain ATCC 13032 / DSM 20300 / JCM 1318 / BCRC 11384 / CCUG 27702 / LMG 3730 / NBRC 12168 / NCIMB 10025 / NRRL B-2784 / 534).